Consider the following 923-residue polypeptide: Phosphoenolpyruvate carboxylase (923 aa).

Residues H149 and K585 contribute to the active site.

This sequence belongs to the PEPCase type 1 family. Requires Mg(2+) as cofactor.

It carries out the reaction oxaloacetate + phosphate = phosphoenolpyruvate + hydrogencarbonate. In terms of biological role, forms oxaloacetate, a four-carbon dicarboxylic acid source for the tricarboxylic acid cycle. This is Phosphoenolpyruvate carboxylase from Nocardia farcinica (strain IFM 10152).